Reading from the N-terminus, the 675-residue chain is UvrABC system protein B (675 aa).

The Helicase ATP-binding domain occupies 32–417 (EGLSDGLAYQ…EHAGQVVEQV (386 aa)). An ATP-binding site is contributed by 45 to 52 (GVTGSGKT). The short motif at 98 to 121 (YYDYYQPEAYVPSRDLFIEKDSAI) is the Beta-hairpin element. The Helicase C-terminal domain maps to 436-602 (QVDDLMSEIN…QIKKQVKDII (167 aa)). The 36-residue stretch at 634-669 (IKEIAKLEKAMQQAARDLQFEEAAVLRDRIRDIKEN) folds into the UVR domain.

It belongs to the UvrB family. In terms of assembly, forms a heterotetramer with UvrA during the search for lesions. Interacts with UvrC in an incision complex.

The protein localises to the cytoplasm. In terms of biological role, the UvrABC repair system catalyzes the recognition and processing of DNA lesions. A damage recognition complex composed of 2 UvrA and 2 UvrB subunits scans DNA for abnormalities. Upon binding of the UvrA(2)B(2) complex to a putative damaged site, the DNA wraps around one UvrB monomer. DNA wrap is dependent on ATP binding by UvrB and probably causes local melting of the DNA helix, facilitating insertion of UvrB beta-hairpin between the DNA strands. Then UvrB probes one DNA strand for the presence of a lesion. If a lesion is found the UvrA subunits dissociate and the UvrB-DNA preincision complex is formed. This complex is subsequently bound by UvrC and the second UvrB is released. If no lesion is found, the DNA wraps around the other UvrB subunit that will check the other stand for damage. The chain is UvrABC system protein B from Neisseria meningitidis serogroup B (strain ATCC BAA-335 / MC58).